A 414-amino-acid polypeptide reads, in one-letter code: Esterase FrsA (414 aa).

Belongs to the FrsA family.

It catalyses the reaction a carboxylic ester + H2O = an alcohol + a carboxylate + H(+). In terms of biological role, catalyzes the hydrolysis of esters. The protein is Esterase FrsA of Escherichia coli O7:K1 (strain IAI39 / ExPEC).